The following is a 399-amino-acid chain: S-adenosylmethionine synthase (399 aa).

Histidine 17 contacts ATP. Position 19 (aspartate 19) interacts with Mg(2+). Glutamate 52 is a binding site for K(+). Glutamate 65 and glutamine 109 together coordinate L-methionine. Residues 109-119 are flexible loop; that stretch reads QSADIAQGVDA. ATP is bound by residues 177 to 179, 243 to 244, aspartate 252, 258 to 259, alanine 275, and lysine 279; these read DSK, KF, and RK. Aspartate 252 is a binding site for L-methionine. Residue lysine 283 coordinates L-methionine.

This sequence belongs to the AdoMet synthase family. As to quaternary structure, homotetramer; dimer of dimers. Mg(2+) serves as cofactor. It depends on K(+) as a cofactor.

The protein resides in the cytoplasm. The catalysed reaction is L-methionine + ATP + H2O = S-adenosyl-L-methionine + phosphate + diphosphate. The protein operates within amino-acid biosynthesis; S-adenosyl-L-methionine biosynthesis; S-adenosyl-L-methionine from L-methionine: step 1/1. Functionally, catalyzes the formation of S-adenosylmethionine (AdoMet) from methionine and ATP. The overall synthetic reaction is composed of two sequential steps, AdoMet formation and the subsequent tripolyphosphate hydrolysis which occurs prior to release of AdoMet from the enzyme. The sequence is that of S-adenosylmethionine synthase from Bradyrhizobium sp. (strain ORS 278).